The chain runs to 336 residues: GTP 3',8-cyclase (336 aa).

A Radical SAM core domain is found at 16 to 241 (AYRRTYYYLR…QSKGITDGPA (226 aa)). GTP is bound at residue R25. Positions 32 and 36 each coordinate [4Fe-4S] cluster. Y38 is an S-adenosyl-L-methionine binding site. [4Fe-4S] cluster is bound at residue C39. R75 contributes to the GTP binding site. Residue G79 participates in S-adenosyl-L-methionine binding. Residue T106 participates in GTP binding. S130 lines the S-adenosyl-L-methionine pocket. K167 contributes to the GTP binding site. M201 serves as a coordination point for S-adenosyl-L-methionine. Positions 264 and 267 each coordinate [4Fe-4S] cluster. 269-271 (RLR) contacts GTP. C281 is a [4Fe-4S] cluster binding site.

This sequence belongs to the radical SAM superfamily. MoaA family. In terms of assembly, monomer and homodimer. [4Fe-4S] cluster is required as a cofactor.

The enzyme catalyses GTP + AH2 + S-adenosyl-L-methionine = (8S)-3',8-cyclo-7,8-dihydroguanosine 5'-triphosphate + 5'-deoxyadenosine + L-methionine + A + H(+). It participates in cofactor biosynthesis; molybdopterin biosynthesis. Its function is as follows. Catalyzes the cyclization of GTP to (8S)-3',8-cyclo-7,8-dihydroguanosine 5'-triphosphate. This chain is GTP 3',8-cyclase, found in Actinobacillus succinogenes (strain ATCC 55618 / DSM 22257 / CCUG 43843 / 130Z).